A 460-amino-acid polypeptide reads, in one-letter code: NADH-ubiquinone oxidoreductase chain 4 (460 aa).

The next 13 helical transmembrane spans lie at 22–42 (WLWPITTTHSLLIALLSLLWF), 59–79 (IDPLSAPLLILTCWLLPLMIL), 93–113 (QRIYITLLISLQTFLIMAFSA), 114–134 (TELIMFYIMFEATLIPTLIII), 148–168 (TYFLFYTLIGSLPLLVALLLM), 195–215 (FWWTACLIAFLVKMPLYGVHL), 225–245 (PIAGSMILAAVLLKLGGYGMM), 258–278 (MAYPFLILAIWGVIMTSSICL), 286–306 (LIAYSSVSHMGLVAGAIMIQT), 310–330 (FAGAITLMIAHGLVSSALFCL), 351–371 (VMLPLMATWWFIANLANLALP), 394–414 (ILLTGLGVLITASYSLYMFLM), and 440–460 (LHLIPMLLLILKPELIWGWTF).

This sequence belongs to the complex I subunit 4 family.

It is found in the mitochondrion membrane. It carries out the reaction a ubiquinone + NADH + 5 H(+)(in) = a ubiquinol + NAD(+) + 4 H(+)(out). In terms of biological role, core subunit of the mitochondrial membrane respiratory chain NADH dehydrogenase (Complex I) that is believed to belong to the minimal assembly required for catalysis. Complex I functions in the transfer of electrons from NADH to the respiratory chain. The immediate electron acceptor for the enzyme is believed to be ubiquinone. The chain is NADH-ubiquinone oxidoreductase chain 4 (MT-ND4) from Squalus acanthias (Spiny dogfish).